Here is a 720-residue protein sequence, read N- to C-terminus: Nucleoporin NUP2 (720 aa).

Positions 1–33 are disordered; the sequence is MAKRVADAQIQRETYDSNESDDDVTPSTKVASS. 2 positions are modified to phosphoserine: serine 17 and serine 20. Positions 35 to 50 are interaction with SRP1 NLS binding site 1; that stretch reads VMNRRKIAMPKRRMAF. Disordered stretches follow at residues 52–92 and 136–278; these read PFGS…SNSR and KSIE…VDNN. Residues 67–69 form an FXF 1 repeat; the sequence is FSF. The span at 81-92 shows a compositional bias: polar residues; that stretch reads VDNSPTTESNSR. Serine 137 is modified (phosphoserine). Basic and acidic residues predominate over residues 147–159; the sequence is NDAKPAKVEDVQK. Serine 165 is modified (phosphoserine). The FXFG 1 repeat unit spans residues 189-192; that stretch reads FSFG. A compositionally biased stretch (basic and acidic residues) spans 193–202; that stretch reads PKKENRKKDE. Serine 203 and serine 205 each carry phosphoserine. FXF repeat units follow at residues 216–218 and 247–249; these read FKF and FSF. Polar residues predominate over residues 243 to 278; sequence NAKPFSFSSATSTTEQTKSKNPLSLTEATKTNVDNN. FXFG repeat units follow at residues 285–288, 302–305, and 318–321; these read FTFG and FVFG. Positions 315-324 are enriched in polar residues; that stretch reads KSSFTFGSTT. The segment at 315–604 is disordered; the sequence is KSSFTFGSTT…KPINLQNGEE (290 aa). Residues 345–360 show a composition bias toward low complexity; the sequence is SNDSNPSFSFSIPSKN. Serine 348 and serine 351 each carry phosphoserine. Residues 352–354 form an FXF 4 repeat; sequence FSF. Threonine 361 is modified (phosphothreonine). The FXFG 5 repeat unit spans residues 369–372; sequence FSFG. Over residues 373 to 384 the composition is skewed to polar residues; it reads VPNSSKNETSKP. Residues 386–389 form an FXFG 6 repeat; that stretch reads FSFG. A compositionally biased stretch (basic and acidic residues) spans 424–435; it reads TEKEKESKKDSK. 5 FXFG repeats span residues 438–441, 474–477, 493–496, 511–514, and 524–527; these read FSFG and FTFG. Residues 479–495 are compositionally biased toward low complexity; that stretch reads NTNTTKTADTKAPTFTF. Polar residues predominate over residues 513–533; the sequence is FGTSQPNNTPSFSFGKTTANL. Low complexity predominate over residues 534–548; the sequence is PANSSTSPAPSIPST. The FXF 5 repeat unit spans residues 550–552; sequence FKF. Residues 574–584 are compositionally biased toward polar residues; the sequence is TEATGNESQDA. A Phosphoserine modification is found at serine 581. The RanBD1 domain occupies 583-720; sequence DATKVDATPE…AIEDAKKEMK (138 aa). Threonine 590 carries the phosphothreonine modification.

In terms of assembly, component of the nuclear pore complex (NPC). NPC constitutes the exclusive means of nucleocytoplasmic transport. NPCs allow the passive diffusion of ions and small molecules and the active, nuclear transport receptor-mediated bidirectional transport of macromolecules such as proteins, RNAs, ribonucleoparticles (RNPs), and ribosomal subunits across the nuclear envelope. Due to its 8-fold rotational symmetry, all subunits are present with 8 copies or multiples thereof. Binds to the nuclear basket of the NPC through NUP60 in a (GSP1, GSP2) GTPase-GTP-dependent manner. Interacts through its FG repeats with nuclear transport factors. Interacts with KAP122.

Its subcellular location is the nucleus. It localises to the nuclear pore complex. The protein resides in the nucleus membrane. Functions as a component of the nuclear pore complex (NPC). NPC components, collectively referred to as nucleoporins (NUPs), can play the role of both NPC structural components and of docking or interaction partners for transiently associated nuclear transport factors. Active directional transport is assured by both, a Phe-Gly (FG) repeat affinity gradient for these transport factors across the NPC and a transport cofactor concentration gradient across the nuclear envelope (GSP1 and GSP2 GTPases associated predominantly with GTP in the nucleus, with GDP in the cytoplasm). As one of the FG repeat nucleoporins NUP2 is involved in interactions with and guidance of nuclear transport receptors such as SRP1-KAP95 (importin alpha and beta) through the NPC. Like the closely related NUP1 it also plays an important role in disassembling and recycling SRP1-KAP95 to the cytoplasm after nuclear import. Upon entry of the heterotrimeric SRP1-KAP95-cargo complex in the nucleus, NUP2 binds through its N-terminus to the SRP1 nuclear localization signal (NLS) binding site, thus accelerating the release of the NLS-cargo. SRP1 in turn is released from NUP2 by binding of the GSP1-GTP associated export factor CSE1. NUP2 may also have a chromatin boundary/insulator activity through indirect interaction with genomic DNA via CSE1 and blocking of heterochromatin spreading. The sequence is that of Nucleoporin NUP2 (NUP2) from Saccharomyces cerevisiae (strain ATCC 204508 / S288c) (Baker's yeast).